The chain runs to 224 residues: Peptidyl-tRNA hydrolase (224 aa).

Y27 provides a ligand contact to tRNA. Residue H32 is the Proton acceptor of the active site. TRNA contacts are provided by Y78, N80, and N126. The segment covering 203–215 has biased composition (low complexity); it reads LSGPSSDLDGSNP. The disordered stretch occupies residues 203–224; that stretch reads LSGPSSDLDGSNPAPGHGEASS.

It belongs to the PTH family. As to quaternary structure, monomer.

It localises to the cytoplasm. The enzyme catalyses an N-acyl-L-alpha-aminoacyl-tRNA + H2O = an N-acyl-L-amino acid + a tRNA + H(+). Its function is as follows. Hydrolyzes ribosome-free peptidyl-tRNAs (with 1 or more amino acids incorporated), which drop off the ribosome during protein synthesis, or as a result of ribosome stalling. Catalyzes the release of premature peptidyl moieties from peptidyl-tRNA molecules trapped in stalled 50S ribosomal subunits, and thus maintains levels of free tRNAs and 50S ribosomes. This Synechococcus sp. (strain JA-2-3B'a(2-13)) (Cyanobacteria bacterium Yellowstone B-Prime) protein is Peptidyl-tRNA hydrolase.